Consider the following 695-residue polypeptide: Segment polarity protein dishevelled homolog DVL-1 (695 aa).

The DIX domain occupies 1–85 (MAETKIIYHM…RVVSWLVLAE (85 aa)). The tract at residues 89–235 (SDAGSQGTDS…QRLRQTDRAS (147 aa)) is disordered. A compositionally biased stretch (basic residues) spans 142 to 151 (SHRRERARRR). A compositionally biased stretch (basic and acidic residues) spans 152–171 (NRDEAARTNGHPRGDRRRDL). The span at 177–192 (SASTVLSSELESSSFI) shows a compositional bias: low complexity. Position 194 is a phosphoserine (S194). Over residues 201 to 214 (SRLSSSTEQSTSSR) the composition is skewed to low complexity. Basic residues predominate over residues 215–228 (LVRKHKCRRRKQRL). The 73-residue stretch at 251 to 323 (TVTLNMERHH…NDDAVRVLRE (73 aa)) folds into the PDZ domain. The region spanning 425–499 (PDSGLEIRDR…SEQCYYVFGD (75 aa)) is the DEP domain. The segment covering 559–580 (SCGSGSAGSQQSEGSKSSGSTR) has biased composition (low complexity). The disordered stretch occupies residues 559–641 (SCGSGSAGSQ…SQASAVAPGL (83 aa)). Residues 622–635 (SQLSRGSSPRSQAS) show a composition bias toward polar residues.

This sequence belongs to the DSH family. As to quaternary structure, interacts with CXXC4. Interacts (via PDZ domain) with TMEM88. Interacts with BRD7 and INVS. Interacts (via PDZ domain) with VANGL1 and VANGL2 (via C-terminus). Interacts (via PDZ domain) with NXN. Interacts with ARRB1; the interaction is enhanced by phosphorylation of DVL1. Interacts with CYLD. Interacts (via PDZ domain) with RYK. Self-associates (via DIX domain) and forms higher homooligomers. Interacts (via PDZ domain) with DACT1 and FZD7, where DACT1 and FZD7 compete for the same binding site. Interacts (via DEP domain) with MUSK; the interaction is direct and mediates the formation a DVL1, MUSK and PAK1 ternary complex involved in AChR clustering. Interacts with DCDC2. Interacts with FOXK2. Interacts with PKD1 (via extracellular domain). Interacts (via PDZ domain) with CCDC88C/DAPLE; competes with CCDC88C for binding to frizzled receptor FZD7 and dissociates from CCDC88C following initiation of non-canonical Wnt signaling when CCDC88C displaces DVL1 from ligand-activated FZD7. In terms of processing, ubiquitinated; undergoes both 'Lys-48'-linked ubiquitination, leading to its subsequent degradation by the ubiquitin-proteasome pathway, and 'Lys-63'-linked ubiquitination. The interaction with INVS is required for ubiquitination. Deubiquitinated by CYLD, which acts on 'Lys-63'-linked ubiquitin chains. High levels are seen in the brain, testis and kidney, lower levels in the ovary, breast, muscle, liver and small intestine, and very low levels are seen in the spleen and thymus. A moderate level expression is seen in the heart.

Its subcellular location is the cell membrane. It localises to the cytoplasm. The protein localises to the cytosol. It is found in the cytoplasmic vesicle. In terms of biological role, participates in Wnt signaling by binding to the cytoplasmic C-terminus of frizzled family members and transducing the Wnt signal to down-stream effectors. Plays a role both in canonical and non-canonical Wnt signaling. Plays a role in the signal transduction pathways mediated by multiple Wnt genes. Required for LEF1 activation upon WNT1 and WNT3A signaling. DVL1 and PAK1 form a ternary complex with MUSK which is important for MUSK-dependent regulation of AChR clustering during the formation of the neuromuscular junction (NMJ). This Mus musculus (Mouse) protein is Segment polarity protein dishevelled homolog DVL-1 (Dvl1).